Reading from the N-terminus, the 182-residue chain is Probable phosphoheptose isomerase (182 aa).

Residues 29-182 form the SIS domain; it reads ISSAISSGNK…MICAMIDEKF (154 aa). Residue 44–46 coordinates substrate; it reads NGG. Zn(2+)-binding residues include H53 and E57. Substrate-binding positions include E57, 86-87, 112-114, S117, and Q164; these read ND and STS. The Zn(2+) site is built by Q164 and H172.

Belongs to the SIS family. GmhA subfamily. Zn(2+) is required as a cofactor.

Its subcellular location is the cytoplasm. The enzyme catalyses 2 D-sedoheptulose 7-phosphate = D-glycero-alpha-D-manno-heptose 7-phosphate + D-glycero-beta-D-manno-heptose 7-phosphate. It functions in the pathway carbohydrate biosynthesis; D-glycero-D-manno-heptose 7-phosphate biosynthesis; D-glycero-alpha-D-manno-heptose 7-phosphate and D-glycero-beta-D-manno-heptose 7-phosphate from sedoheptulose 7-phosphate: step 1/1. In terms of biological role, catalyzes the isomerization of sedoheptulose 7-phosphate in D-glycero-D-manno-heptose 7-phosphate. The protein is Probable phosphoheptose isomerase of Thermoplasma acidophilum (strain ATCC 25905 / DSM 1728 / JCM 9062 / NBRC 15155 / AMRC-C165).